A 1306-amino-acid chain; its full sequence is Kinesin-like protein KIN-14L (1306 aa).

A Kinesin motor domain is found at 142–456; it reads NVKVFCRSRP…LSFSARAKNA (315 aa). 223–230 provides a ligand contact to ATP; it reads GQSRSGKT. Coiled coils occupy residues 466–507 and 540–595; these read IKKW…ANDQ and HRIE…ALNS. Polar residues-rich tracts occupy residues 592 to 611 and 660 to 677; these read ALNS…SVIS and LGSS…TNAQ. 3 disordered regions span residues 592–627, 657–710, and 849–881; these read ALNS…SVTK, KSGL…SGAI, and KSHT…RTSL. A compositionally biased stretch (low complexity) spans 855-867; the sequence is SRSSSRGSSPGRS.

The protein belongs to the TRAFAC class myosin-kinesin ATPase superfamily. Kinesin family. KIN-14 subfamily.

The sequence is that of Kinesin-like protein KIN-14L from Oryza sativa subsp. japonica (Rice).